Reading from the N-terminus, the 467-residue chain is Light-independent protochlorophyllide reductase subunit N (467 aa).

Residues cysteine 22, cysteine 47, and cysteine 107 each contribute to the [4Fe-4S] cluster site.

It belongs to the BchN/ChlN family. In terms of assembly, protochlorophyllide reductase is composed of three subunits; ChlL, ChlN and ChlB. Forms a heterotetramer of two ChlB and two ChlN subunits. It depends on [4Fe-4S] cluster as a cofactor.

It is found in the plastid. Its subcellular location is the chloroplast. It catalyses the reaction chlorophyllide a + oxidized 2[4Fe-4S]-[ferredoxin] + 2 ADP + 2 phosphate = protochlorophyllide a + reduced 2[4Fe-4S]-[ferredoxin] + 2 ATP + 2 H2O. It functions in the pathway porphyrin-containing compound metabolism; chlorophyll biosynthesis (light-independent). In terms of biological role, component of the dark-operative protochlorophyllide reductase (DPOR) that uses Mg-ATP and reduced ferredoxin to reduce ring D of protochlorophyllide (Pchlide) to form chlorophyllide a (Chlide). This reaction is light-independent. The NB-protein (ChlN-ChlB) is the catalytic component of the complex. The chain is Light-independent protochlorophyllide reductase subunit N from Pinus thunbergii (Japanese black pine).